The primary structure comprises 291 residues: Ribose-phosphate pyrophosphokinase (291 aa).

Residues D34 to E36 and R93 to Q94 each bind ATP. Residues H127 and D165 each coordinate Mg(2+). Residue K188 is part of the active site. D-ribose 5-phosphate is bound by residues R190, D216, and S220–T224.

This sequence belongs to the ribose-phosphate pyrophosphokinase family. Class III (archaeal) subfamily. It depends on Mg(2+) as a cofactor.

It localises to the cytoplasm. The catalysed reaction is D-ribose 5-phosphate + ATP = 5-phospho-alpha-D-ribose 1-diphosphate + AMP + H(+). Its pathway is metabolic intermediate biosynthesis; 5-phospho-alpha-D-ribose 1-diphosphate biosynthesis; 5-phospho-alpha-D-ribose 1-diphosphate from D-ribose 5-phosphate (route I): step 1/1. In terms of biological role, involved in the biosynthesis of the central metabolite phospho-alpha-D-ribosyl-1-pyrophosphate (PRPP) via the transfer of pyrophosphoryl group from ATP to 1-hydroxyl of ribose-5-phosphate (Rib-5-P). This is Ribose-phosphate pyrophosphokinase from Sulfurisphaera tokodaii (strain DSM 16993 / JCM 10545 / NBRC 100140 / 7) (Sulfolobus tokodaii).